The following is a 553-amino-acid chain: Solute carrier family 22 member 4 (553 aa).

The Cytoplasmic portion of the chain corresponds to 1 to 20 (MRDYDEVIAFLGEWGPFQRL). The chain crosses the membrane as a helical span at residues 21–41 (IFFLLSASIIPNGFNGMSVVF). Residues 42 to 142 (LAGTPEHRCL…NLVCEDDWKT (101 aa)) are Extracellular-facing. Asparagine 57, asparagine 64, and asparagine 91 each carry an N-linked (GlcNAc...) asparagine glycan. The helical transmembrane segment at 143–163 (PLTTSLFFVGVLCGSFVSGQL) threads the bilayer. Over 164–171 (SDRFGRKK) the chain is Cytoplasmic. The chain crosses the membrane as a helical span at residues 172–192 (VLFATMAVQTGFSFVQIFSTN). The Extracellular portion of the chain corresponds to 193–197 (WEMFT). Residues 198–218 (VLFAIVGMGQISNYVVAFILG) traverse the membrane as a helical segment. 218–225 (GTEILSKS) is a binding site for ATP. Residues 219–232 (TEILSKSVRIIFST) are Cytoplasmic-facing. Residues 233 to 253 (LGVCTFFAIGYMVLPLFAYFI) form a helical membrane-spanning segment. Residues 254 to 257 (RDWR) lie on the Extracellular side of the membrane. The chain crosses the membrane as a helical span at residues 258-278 (MLLLALTLPGLFCVPLWWFIP). Residues 279 to 339 (ESPRWLISQR…IILDLFRTRN (61 aa)) lie on the Cytoplasmic side of the membrane. A helical membrane pass occupies residues 340 to 360 (IATITVMAVMLWMLTSVGYFA). The Extracellular segment spans residues 361–373 (LSLNVPNLHGDVY). The chain crosses the membrane as a helical span at residues 374–394 (LNCFLSGLIEVPAYFTAWLLL). Residues 395 to 400 (RTLPRR) are Cytoplasmic-facing. The chain crosses the membrane as a helical span at residues 401–421 (YIIAGVLFWGGGVLLLIQVVP). Residues 422–428 (EDYNFVS) are Extracellular-facing. Residues 429-449 (IGLVMLGKFGITSAFSMLYVF) traverse the membrane as a helical segment. Residues 450–462 (TAELYPTLVRNMA) are Cytoplasmic-facing. The chain crosses the membrane as a helical span at residues 463-483 (VGITSMASRVGSIIAPYFVYL). Topologically, residues 484-488 (GAYNR) are extracellular. A helical transmembrane segment spans residues 489-509 (LLPYILMGSLTVLIGIITLFF). The Cytoplasmic portion of the chain corresponds to 510–553 (PESFGVTLPENLEQMQKVRGFRCGKKSTVSVDREESPKVLITAF).

This sequence belongs to the major facilitator (TC 2.A.1) superfamily. Organic cation transporter (TC 2.A.1.19) family. Interacts with PDZK1. In terms of tissue distribution, expressed in kidney. Expressed in small intestines. Expressed in liver in non-parenchymal liver tissue such as sinusoidal vessels. Weakly expressed in lung and brain. Expressed in testis and spleen. Expressed in heart.

It is found in the apical cell membrane. The protein resides in the mitochondrion membrane. It localises to the basal cell membrane. It catalyses the reaction ergothioneine(out) + Na(+)(out) = ergothioneine(in) + Na(+)(in). It carries out the reaction acetylcholine(in) = acetylcholine(out). The catalysed reaction is (R)-carnitine(out) + Na(+)(out) = (R)-carnitine(in) + Na(+)(in). The enzyme catalyses glycine betaine(out) + Na(+)(out) = glycine betaine(in) + Na(+)(in). With respect to regulation, allosterically activated by intracellular ATP. Its function is as follows. Transporter that mediates the transport of endogenous and microbial zwitterions and organic cations. Functions as a Na(+)-dependent and pH-dependent high affinity microbial symporter of potent food-derived antioxidant ergothioeine. Transports one sodium ion with one ergothioeine molecule. Involved in the absorption of ergothioneine from the luminal/apical side of the small intestine and renal tubular cells, and into non-parenchymal liver cells, thereby contributing to maintain steady-state ergothioneine level in the body. Also mediates the bidirectional transport of acetycholine, although the exact transport mechanism has not been fully identified yet. Most likely exports anti-inflammatory acetylcholine in non-neuronal tissues, thereby contributing to the non-neuronal cholinergic system. Displays a general physiological role linked to better survival by controlling inflammation and oxidative stress, which may be related to ergothioneine and acetycholine transports. May also function as a low-affinity Na(+)-dependent transporter of L-carnitine through the mitochondrial membrane, thereby maintaining intracellular carnitine homeostasis. May contribute to regulate the transport of cationic compounds in testis across the blood-testis-barrier. The protein is Solute carrier family 22 member 4 of Mus musculus (Mouse).